We begin with the raw amino-acid sequence, 117 residues long: Huntingtin-interacting protein M (117 aa).

Disordered regions lie at residues 1 to 30 and 71 to 117; these read MSEK…VPRS and EASN…RKND. Polar residues predominate over residues 72 to 81; that stretch reads ASNNGSMRNT. The span at 82 to 117 shows a compositional bias: basic and acidic residues; sequence SQDREREVDNNREPHSAESDVTRFLFDEMPKSRKND.

As to quaternary structure, may interact with the N-terminus of HD.

The chain is Huntingtin-interacting protein M from Homo sapiens (Human).